Reading from the N-terminus, the 279-residue chain is Phycobilisome rod-core linker polypeptide CpcG1 (279 aa).

Positions 11–189 constitute a PBS-linker domain; that stretch reads TTQNQRVEGY…YWRNRLLEQF (179 aa).

This sequence belongs to the phycobilisome linker protein family. As to quaternary structure, the phycobilisome is a hemidiscoidal structure that is composed of two distinct substructures: a core complex and a number of rods radiating from the core.

It is found in the cellular thylakoid membrane. In terms of biological role, rod-core linker protein required for attachment of phycocyanin to allophycocyanin in cores of phycobilisomes. Its function is as follows. Linker polypeptides determine the state of aggregation and the location of the disk-shaped phycobiliprotein units within the phycobilisome and modulate their spectroscopic properties in order to mediate a directed and optimal energy transfer. This is Phycobilisome rod-core linker polypeptide CpcG1 (cpcG1) from Mastigocladus laminosus (Fischerella sp.).